The chain runs to 159 residues: Ribosomal RNA large subunit methyltransferase H (159 aa).

S-adenosyl-L-methionine-binding positions include Leu76, Gly108, and 127–132; that span reads FSKMTF.

It belongs to the RNA methyltransferase RlmH family. As to quaternary structure, homodimer.

Its subcellular location is the cytoplasm. It carries out the reaction pseudouridine(1915) in 23S rRNA + S-adenosyl-L-methionine = N(3)-methylpseudouridine(1915) in 23S rRNA + S-adenosyl-L-homocysteine + H(+). Its function is as follows. Specifically methylates the pseudouridine at position 1915 (m3Psi1915) in 23S rRNA. In Exiguobacterium sp. (strain ATCC BAA-1283 / AT1b), this protein is Ribosomal RNA large subunit methyltransferase H.